The sequence spans 173 residues: Crossover junction endodeoxyribonuclease RuvC (173 aa).

Catalysis depends on residues D8, E67, and D139. D8, E67, and D139 together coordinate Mg(2+).

This sequence belongs to the RuvC family. Homodimer which binds Holliday junction (HJ) DNA. The HJ becomes 2-fold symmetrical on binding to RuvC with unstacked arms; it has a different conformation from HJ DNA in complex with RuvA. In the full resolvosome a probable DNA-RuvA(4)-RuvB(12)-RuvC(2) complex forms which resolves the HJ. Requires Mg(2+) as cofactor.

Its subcellular location is the cytoplasm. The enzyme catalyses Endonucleolytic cleavage at a junction such as a reciprocal single-stranded crossover between two homologous DNA duplexes (Holliday junction).. Its function is as follows. The RuvA-RuvB-RuvC complex processes Holliday junction (HJ) DNA during genetic recombination and DNA repair. Endonuclease that resolves HJ intermediates. Cleaves cruciform DNA by making single-stranded nicks across the HJ at symmetrical positions within the homologous arms, yielding a 5'-phosphate and a 3'-hydroxyl group; requires a central core of homology in the junction. The consensus cleavage sequence is 5'-(A/T)TT(C/G)-3'. Cleavage occurs on the 3'-side of the TT dinucleotide at the point of strand exchange. HJ branch migration catalyzed by RuvA-RuvB allows RuvC to scan DNA until it finds its consensus sequence, where it cleaves and resolves the cruciform DNA. The sequence is that of Crossover junction endodeoxyribonuclease RuvC from Shewanella putrefaciens (strain CN-32 / ATCC BAA-453).